The sequence spans 256 residues: Thiazole synthase (256 aa).

Lys-95 serves as the catalytic Schiff-base intermediate with DXP. 1-deoxy-D-xylulose 5-phosphate contacts are provided by residues Gly-156, 182–183 (AG), and 204–205 (NT).

The protein belongs to the ThiG family. In terms of assembly, homotetramer. Forms heterodimers with either ThiH or ThiS.

The protein localises to the cytoplasm. The enzyme catalyses [ThiS sulfur-carrier protein]-C-terminal-Gly-aminoethanethioate + 2-iminoacetate + 1-deoxy-D-xylulose 5-phosphate = [ThiS sulfur-carrier protein]-C-terminal Gly-Gly + 2-[(2R,5Z)-2-carboxy-4-methylthiazol-5(2H)-ylidene]ethyl phosphate + 2 H2O + H(+). It functions in the pathway cofactor biosynthesis; thiamine diphosphate biosynthesis. In terms of biological role, catalyzes the rearrangement of 1-deoxy-D-xylulose 5-phosphate (DXP) to produce the thiazole phosphate moiety of thiamine. Sulfur is provided by the thiocarboxylate moiety of the carrier protein ThiS. In vitro, sulfur can be provided by H(2)S. In Salmonella enteritidis PT4 (strain P125109), this protein is Thiazole synthase.